A 371-amino-acid chain; its full sequence is Queuine tRNA-ribosyltransferase (371 aa).

Residue D90 is the Proton acceptor of the active site. Residues 90 to 94 (DSGGF), D144, Q188, and G215 each bind substrate. Residues 246-252 (GVGTPED) are RNA binding. The active-site Nucleophile is D265. An RNA binding; important for wobble base 34 recognition region spans residues 270 to 274 (TRNAR). Residues C303, C305, C308, and H334 each contribute to the Zn(2+) site.

The protein belongs to the queuine tRNA-ribosyltransferase family. As to quaternary structure, homodimer. Within each dimer, one monomer is responsible for RNA recognition and catalysis, while the other monomer binds to the replacement base PreQ1. The cofactor is Zn(2+).

The enzyme catalyses 7-aminomethyl-7-carbaguanine + guanosine(34) in tRNA = 7-aminomethyl-7-carbaguanosine(34) in tRNA + guanine. Its pathway is tRNA modification; tRNA-queuosine biosynthesis. Functionally, catalyzes the base-exchange of a guanine (G) residue with the queuine precursor 7-aminomethyl-7-deazaguanine (PreQ1) at position 34 (anticodon wobble position) in tRNAs with GU(N) anticodons (tRNA-Asp, -Asn, -His and -Tyr). Catalysis occurs through a double-displacement mechanism. The nucleophile active site attacks the C1' of nucleotide 34 to detach the guanine base from the RNA, forming a covalent enzyme-RNA intermediate. The proton acceptor active site deprotonates the incoming PreQ1, allowing a nucleophilic attack on the C1' of the ribose to form the product. After dissociation, two additional enzymatic reactions on the tRNA convert PreQ1 to queuine (Q), resulting in the hypermodified nucleoside queuosine (7-(((4,5-cis-dihydroxy-2-cyclopenten-1-yl)amino)methyl)-7-deazaguanosine). The polypeptide is Queuine tRNA-ribosyltransferase (Neisseria meningitidis serogroup C / serotype 2a (strain ATCC 700532 / DSM 15464 / FAM18)).